Consider the following 200-residue polypeptide: 3-isopropylmalate dehydratase small subunit (200 aa).

It belongs to the LeuD family. LeuD type 1 subfamily. In terms of assembly, heterodimer of LeuC and LeuD.

The enzyme catalyses (2R,3S)-3-isopropylmalate = (2S)-2-isopropylmalate. It participates in amino-acid biosynthesis; L-leucine biosynthesis; L-leucine from 3-methyl-2-oxobutanoate: step 2/4. Its function is as follows. Catalyzes the isomerization between 2-isopropylmalate and 3-isopropylmalate, via the formation of 2-isopropylmaleate. The sequence is that of 3-isopropylmalate dehydratase small subunit from Yersinia pestis bv. Antiqua (strain Antiqua).